Here is an 858-residue protein sequence, read N- to C-terminus: Heat shock protein 105 kDa (858 aa).

An N-acetylserine modification is found at Ser-2. Position 471 is an N6-acetyllysine (Lys-471). 2 disordered regions span residues 500–585 (KVPT…PPEA) and 801–858 (VNQP…MDLD). A compositionally biased stretch (acidic residues) spans 504–515 (EEDDGSSVEADM). A phosphoserine mark is found at Ser-509 and Ser-510. Polar residues predominate over residues 533–549 (QQDNSEAGTQPQVQTDG). Ser-558 bears the Phosphoserine mark. 2 stretches are compositionally biased toward basic and acidic residues: residues 564–585 (EENK…PPEA) and 806–815 (PKIESPKLER). The residue at position 810 (Ser-810) is a Phosphoserine. Residue Thr-816 is modified to Phosphothreonine. Basic and acidic residues predominate over residues 822-834 (LDKKEDLEGKDNF).

This sequence belongs to the heat shock protein 70 family. Interacts with HSPA8/HSC70. Interacts with HSPA1A (via NBD) and HSPA1B (via NBD). Phosphorylation on Ser-509 may be important for regulation of the HSPA8/HSC70 chaperone activity. As to expression, predominantly expressed in the brain and also found in the liver.

It localises to the cytoplasm. Its function is as follows. Acts as a nucleotide-exchange factor (NEF) for chaperone proteins HSPA1A and HSPA1B, promoting the release of ADP from HSPA1A/B thereby triggering substrate release. Prevents the aggregation of denatured proteins in cells under severe stress, on which the ATP levels decrease markedly. Inhibits HSPA8/HSC70 ATPase and chaperone activities. The polypeptide is Heat shock protein 105 kDa (HSPH1) (Cricetulus griseus (Chinese hamster)).